The primary structure comprises 939 residues: Tyrosine-protein kinase Shark (939 aa).

The SH2 1 domain maps to 10 to 106; the sequence is WYHGNLSREA…GLPTKLTVPL (97 aa). 3 ANK repeats span residues 153 to 185, 186 to 218, and 220 to 252; these read DGQTALHLAALHSDEDILKHLLNAKVQVNSSDS, FGCQPLHYAARSKPASFIRTLISAQANVQGRNI, and NGYVPLHEAAKHGNLEAVQELLLAEAPPLPRTS. In terms of domain architecture, SH2 2 spans 288–403; sequence WYHGTLTREE…GLPVSLKYPV (116 aa). Disordered stretches follow at residues 410–446 and 476–505; these read EVPSFATIPRSNMKPKAASPATPPTPVSPHSHHQHPH and ALFDMNSLRKNKSKGKRSDSESSVSGSLAG. A compositionally biased stretch (polar residues) spans 496-505; that stretch reads ESSVSGSLAG. In terms of domain architecture, Protein kinase spans 662 to 921; it reads LVLDREIGHG…PTFVYLTEFF (260 aa). ATP is bound by residues 668–676 and Lys698; that span reads IGHGEFGSV. Catalysis depends on Asp789, which acts as the Proton acceptor. Position 927 is a phosphotyrosine (Tyr927).

It belongs to the protein kinase superfamily. Tyr protein kinase family. As to quaternary structure, interacts with drpr; this is required for the recruitment of drpr and glial cells to severed axons and for the phagocytosis of axonal debris by glial cells following axon injury. Gastrulation embryos show expression in ectodermal cells along the cephalic furrow and ventral midline. Proctodeum, stomodeum and their derived structures (foregut, atrium, pharynx, esophagus and hindgut) continue to show expression from stage 8-9 to late embryos. Other ectodermally derived structures (frontal sac, salivary gland and labium) and developing tracheal system also show expression.

Its subcellular location is the cytoplasm. It catalyses the reaction L-tyrosyl-[protein] + ATP = O-phospho-L-tyrosyl-[protein] + ADP + H(+). Functionally, following axon injury, required for recruitment of drpr and glial cells to severed axons and for glial clearance of severed axons from the central nervous system. Together with Src42a and drpr, promotes the migration of macrophages to sites of wounding as part of a signaling cascade where Scr42a detects production of hydrogen peroxide at wound sites which triggers phosphorylation of drpr and subsequent recruitment and activation of shark. May be involved in signal transduction on the apical surface of ectodermal epithelial cells, regulating their polarity during invagination. Crumbs (crb) may be the intracellular signal. The polypeptide is Tyrosine-protein kinase Shark (Drosophila melanogaster (Fruit fly)).